The chain runs to 223 residues: Large ribosomal subunit protein uL4c (223 aa).

Residues 61 to 96 are disordered; the sequence is TKTRSEVEGGGKKPWKQKGTGNARAGSSNSPLWKGG.

It belongs to the universal ribosomal protein uL4 family. Part of the 50S ribosomal subunit.

The protein localises to the plastid. Its subcellular location is the chloroplast. Probably binds the 23S rRNA. The chain is Large ribosomal subunit protein uL4c (rpl4) from Guillardia theta (Cryptophyte).